The primary structure comprises 625 residues: ATP-dependent RNA helicase mrh4, mitochondrial (625 aa).

The transit peptide at 1 to 16 directs the protein to the mitochondrion; sequence MWKTARDSVCLICRSA. The span at 19–28 shows a compositional bias: low complexity; it reads TTTSTSARAS. Residues 19-119 are disordered; sequence TTTSTSARAS…DKNTKGQKAL (101 aa). Positions 90–113 are enriched in basic and acidic residues; the sequence is DPRKAPKPKPVEEDSRRDKRDKNT. Residues 144-177 carry the Q motif motif; the sequence is QAFDQFDLLPVVKEAIAQEALKGMTEIKPTPVQR. In terms of domain architecture, Helicase ATP-binding spans 195-406; the sequence is PKSDNGREEF…EEQFPYINRI (212 aa). 208 to 215 is a binding site for ATP; it reads AETGSGKT. A DEAD box motif is present at residues 353 to 356; it reads DEAD. The region spanning 453–625 is the Helicase C-terminal domain; it reads EGPKSEIDVK…ESMFMGQALV (173 aa).

The protein belongs to the DEAD box helicase family. MRH4 subfamily.

It is found in the mitochondrion. The catalysed reaction is ATP + H2O = ADP + phosphate + H(+). In terms of biological role, ATP-binding RNA helicase involved in mitochondrial RNA metabolism. Required for maintenance of mitochondrial DNA. This is ATP-dependent RNA helicase mrh4, mitochondrial (drh-15) from Neurospora crassa (strain ATCC 24698 / 74-OR23-1A / CBS 708.71 / DSM 1257 / FGSC 987).